Reading from the N-terminus, the 103-residue chain is uncharacterized protein (103 aa).

Helical transmembrane passes span 1 to 21 (MPGV…VFLS), 29 to 49 (IAFI…TGYF), and 69 to 89 (VVEW…GLLF).

The protein resides in the cell membrane. This is an uncharacterized protein from Methanocaldococcus jannaschii (strain ATCC 43067 / DSM 2661 / JAL-1 / JCM 10045 / NBRC 100440) (Methanococcus jannaschii).